Here is a 735-residue protein sequence, read N- to C-terminus: Coiled-coil quantitatively-enriched protein 1 (735 aa).

Positions 514–719 form a coiled coil; it reads AAVQYLQRRL…TLKILEQKSL (206 aa).

As to quaternary structure, interacts (during meiosis) with pcp1. Interacts with clr3, pot1, taz1 and tpz1.

Its subcellular location is the nucleus. It is found in the nucleoplasm. The protein localises to the chromosome. The protein resides in the telomere. In terms of biological role, component of the meiotic bouquet that facilitates meiotic nuclear reorganization of the telomeres to the centrosome. Links telomeres to the meiotic centrosome component pcp1. Essential for the formation of normal telomere clusters during meiotic prophase. Required for telomere length regulation and chromosome segregation. Required for proper positioning of nucleosomes at heterochromatic loci and for transcriptional gene silencing (TGS) function of the Snf2/Hdac-containing repressor complex (SHREC). The protein is Coiled-coil quantitatively-enriched protein 1 (ccq1) of Schizosaccharomyces pombe (strain 972 / ATCC 24843) (Fission yeast).